The chain runs to 296 residues: Cytidine deaminase (296 aa).

2 consecutive CMP/dCMP-type deaminase domains span residues 47-167 and 186-296; these read TEAE…FGPK and DSAD…IDPV. 88-90 contributes to the substrate binding site; it reads NLE. H101 contacts Zn(2+). Catalysis depends on E103, which acts as the Proton donor. Residues C128 and C131 each contribute to the Zn(2+) site.

This sequence belongs to the cytidine and deoxycytidylate deaminase family. In terms of assembly, homodimer. Zn(2+) is required as a cofactor.

It catalyses the reaction cytidine + H2O + H(+) = uridine + NH4(+). The enzyme catalyses 2'-deoxycytidine + H2O + H(+) = 2'-deoxyuridine + NH4(+). Functionally, this enzyme scavenges exogenous and endogenous cytidine and 2'-deoxycytidine for UMP synthesis. In Shewanella baltica (strain OS155 / ATCC BAA-1091), this protein is Cytidine deaminase.